The primary structure comprises 335 residues: Glycerol-3-phosphate dehydrogenase [NAD(P)+] (335 aa).

NADPH-binding residues include Trp12 and Lys106. Positions 106, 136, and 138 each coordinate sn-glycerol 3-phosphate. Ala140 is a binding site for NADPH. 5 residues coordinate sn-glycerol 3-phosphate: Lys191, Asp244, Ser254, Arg255, and Asn256. The active-site Proton acceptor is the Lys191. An NADPH-binding site is contributed by Arg255. The NADPH site is built by Val279 and Glu281.

The protein belongs to the NAD-dependent glycerol-3-phosphate dehydrogenase family.

It is found in the cytoplasm. The enzyme catalyses sn-glycerol 3-phosphate + NAD(+) = dihydroxyacetone phosphate + NADH + H(+). The catalysed reaction is sn-glycerol 3-phosphate + NADP(+) = dihydroxyacetone phosphate + NADPH + H(+). The protein operates within membrane lipid metabolism; glycerophospholipid metabolism. Catalyzes the reduction of the glycolytic intermediate dihydroxyacetone phosphate (DHAP) to sn-glycerol 3-phosphate (G3P), the key precursor for phospholipid synthesis. The protein is Glycerol-3-phosphate dehydrogenase [NAD(P)+] of Fusobacterium nucleatum subsp. nucleatum (strain ATCC 25586 / DSM 15643 / BCRC 10681 / CIP 101130 / JCM 8532 / KCTC 2640 / LMG 13131 / VPI 4355).